The sequence spans 110 residues: UPF0122 protein STER_0914 (110 aa).

This sequence belongs to the UPF0122 family.

Its function is as follows. Might take part in the signal recognition particle (SRP) pathway. This is inferred from the conservation of its genetic proximity to ftsY/ffh. May be a regulatory protein. This Streptococcus thermophilus (strain ATCC BAA-491 / LMD-9) protein is UPF0122 protein STER_0914.